A 552-amino-acid chain; its full sequence is MVTKHRPVQAYTGSTLHAKGWIQEAALRMLNNNLHPEVAERPEDLVVYGGIGKAARNWECYGAIVETLLNLENDETLLIQSGKPVAVFKTHTDAPRVLIANSNLVPAWATWDHFHELDKKGLIMYGQMTAGSWIYIGSQGIVQGTYETFAEVARQHYGGTLKGTITVTAGLGGMGGAQPLAVTLNGGVCIAVEVDPARIQRRIDTKYLDTMTDRLDVAIQMAKRAKEEGKALSIGLLGNAAEVLPKMIEIGFIPDVLTDQTSAHDPLNGYIPAGMTLEEAAELRQRDPKQYIRRAKQSIAEHVKAMLAMQKQGSVTFDYGNNIRQVAKDEGVEEAFNFPGFVPAYIRPLFCEGKGPFRWVALSGDPEDIYKTDEVILREFSDNQHLCNWIRMAREKIQFQGLPARICWLGYGERAKFGKIINDMVAKGELKAPIVIGRDHLDSGSVASPNRETEGMKDGSDAIADWPILNALLNAVGGASWVSVHHGGGVGMGYSIHAGMVIVADGTKEAEKRLERVLTTDPGLGVVRHADAGYELAIKTAKEKGIHMPMLK.

Residues 49–50 (GG), Gln-127, 173–175 (GMG), Glu-193, Arg-198, 239–240 (NA), 260–264 (QTSAH), 270–271 (YI), and Tyr-319 contribute to the NAD(+) site. Cys-407 is an active-site residue. Position 489 (Gly-489) interacts with NAD(+).

The protein belongs to the urocanase family. Requires NAD(+) as cofactor.

Its subcellular location is the cytoplasm. The enzyme catalyses 4-imidazolone-5-propanoate = trans-urocanate + H2O. The protein operates within amino-acid degradation; L-histidine degradation into L-glutamate; N-formimidoyl-L-glutamate from L-histidine: step 2/3. Its function is as follows. Catalyzes the conversion of urocanate to 4-imidazolone-5-propionate. This Geobacillus sp. (strain WCH70) protein is Urocanate hydratase.